A 396-amino-acid polypeptide reads, in one-letter code: Elongation factor Tu 1 (396 aa).

The region spanning 10–206 (KPHCNIGTIG…TVDDYIPQPD (197 aa)) is the tr-type G domain. Residues 19 to 26 (GHVDHGKT) are G1. 19 to 26 (GHVDHGKT) contributes to the GTP binding site. Threonine 26 is a binding site for Mg(2+). The G2 stretch occupies residues 60-64 (GITIN). The interval 81–84 (DCPG) is G3. GTP-binding positions include 81–85 (DCPGH) and 136–139 (NKVD). The interval 136–139 (NKVD) is G4. Residues 174–176 (SAK) form a G5 region.

This sequence belongs to the TRAFAC class translation factor GTPase superfamily. Classic translation factor GTPase family. EF-Tu/EF-1A subfamily. As to quaternary structure, monomer.

It is found in the cytoplasm. It catalyses the reaction GTP + H2O = GDP + phosphate + H(+). Functionally, GTP hydrolase that promotes the GTP-dependent binding of aminoacyl-tRNA to the A-site of ribosomes during protein biosynthesis. The protein is Elongation factor Tu 1 of Caulobacter sp. (strain K31).